The sequence spans 1008 residues: DNA polymerase catalytic subunit (1008 aa).

The protein belongs to the DNA polymerase type-B family.

The protein resides in the host nucleus. It carries out the reaction DNA(n) + a 2'-deoxyribonucleoside 5'-triphosphate = DNA(n+1) + diphosphate. The polypeptide is DNA polymerase catalytic subunit (9) (Equine herpesvirus 2 (strain 86/87) (EHV-2)).